A 241-amino-acid polypeptide reads, in one-letter code: 3-oxoacyl-[acyl-carrier-protein] reductase FabG (241 aa).

Residues 13–16 (GASS), S38, 57–58 (EV), and N83 each bind NADP(+). Substrate is bound at residue S135. Residue Y148 is the Proton acceptor of the active site. Residues 148 to 152 (YCASK) and I181 each bind NADP(+).

Belongs to the short-chain dehydrogenases/reductases (SDR) family. Homotetramer.

It carries out the reaction a (3R)-hydroxyacyl-[ACP] + NADP(+) = a 3-oxoacyl-[ACP] + NADPH + H(+). The protein operates within lipid metabolism; fatty acid biosynthesis. Functionally, catalyzes the NADPH-dependent reduction of beta-ketoacyl-ACP substrates to beta-hydroxyacyl-ACP products, the first reductive step in the elongation cycle of fatty acid biosynthesis. The chain is 3-oxoacyl-[acyl-carrier-protein] reductase FabG (fabG) from Rickettsia prowazekii (strain Madrid E).